The chain runs to 199 residues: Adenosylcobinamide-GDP ribazoletransferase (199 aa).

Helical transmembrane passes span 2-22 and 61-81; these read LAGG…VFAV and IAAV…VAAL.

This sequence belongs to the CobS family. It depends on Mg(2+) as a cofactor.

The protein localises to the cell membrane. The enzyme catalyses alpha-ribazole + adenosylcob(III)inamide-GDP = adenosylcob(III)alamin + GMP + H(+). It carries out the reaction alpha-ribazole 5'-phosphate + adenosylcob(III)inamide-GDP = adenosylcob(III)alamin 5'-phosphate + GMP + H(+). It participates in cofactor biosynthesis; adenosylcobalamin biosynthesis; adenosylcobalamin from cob(II)yrinate a,c-diamide: step 7/7. Functionally, joins adenosylcobinamide-GDP and alpha-ribazole to generate adenosylcobalamin (Ado-cobalamin). Also synthesizes adenosylcobalamin 5'-phosphate from adenosylcobinamide-GDP and alpha-ribazole 5'-phosphate. In Halobacterium salinarum (strain ATCC 700922 / JCM 11081 / NRC-1) (Halobacterium halobium), this protein is Adenosylcobinamide-GDP ribazoletransferase.